We begin with the raw amino-acid sequence, 598 residues long: UvrABC system protein C (598 aa).

A GIY-YIG domain is found at 14–91; sequence DSPGCYLHKD…IQKNMPKYNI (78 aa). The UVR domain maps to 196–231; sequence DKIIEDLRSKMLAASEEMAFERAAEYRDLISGIATM.

Belongs to the UvrC family. Interacts with UvrB in an incision complex.

The protein resides in the cytoplasm. In terms of biological role, the UvrABC repair system catalyzes the recognition and processing of DNA lesions. UvrC both incises the 5' and 3' sides of the lesion. The N-terminal half is responsible for the 3' incision and the C-terminal half is responsible for the 5' incision. This is UvrABC system protein C from Streptococcus pyogenes serotype M5 (strain Manfredo).